The sequence spans 299 residues: Ribosomal RNA small subunit methyltransferase H (299 aa).

Residues 35 to 37 (GGH), Asp-54, Tyr-80, Asp-101, and Gln-108 each bind S-adenosyl-L-methionine.

This sequence belongs to the methyltransferase superfamily. RsmH family.

The protein localises to the cytoplasm. It carries out the reaction cytidine(1402) in 16S rRNA + S-adenosyl-L-methionine = N(4)-methylcytidine(1402) in 16S rRNA + S-adenosyl-L-homocysteine + H(+). Its function is as follows. Specifically methylates the N4 position of cytidine in position 1402 (C1402) of 16S rRNA. This Coprothermobacter proteolyticus (strain ATCC 35245 / DSM 5265 / OCM 4 / BT) protein is Ribosomal RNA small subunit methyltransferase H.